Here is a 431-residue protein sequence, read N- to C-terminus: Ribosomal protein uS12 methylthiotransferase RimO (431 aa).

The 117-residue stretch at His-4–His-120 folds into the MTTase N-terminal domain. The [4Fe-4S] cluster site is built by Cys-13, Cys-49, Cys-83, Cys-144, Cys-148, and Cys-151. The Radical SAM core domain maps to Leu-130–Asp-359. The 68-residue stretch at Arg-362–Gly-429 folds into the TRAM domain.

This sequence belongs to the methylthiotransferase family. RimO subfamily. The cofactor is [4Fe-4S] cluster.

It localises to the cytoplasm. It catalyses the reaction L-aspartate(89)-[ribosomal protein uS12]-hydrogen + (sulfur carrier)-SH + AH2 + 2 S-adenosyl-L-methionine = 3-methylsulfanyl-L-aspartate(89)-[ribosomal protein uS12]-hydrogen + (sulfur carrier)-H + 5'-deoxyadenosine + L-methionine + A + S-adenosyl-L-homocysteine + 2 H(+). Functionally, catalyzes the methylthiolation of an aspartic acid residue of ribosomal protein uS12. This is Ribosomal protein uS12 methylthiotransferase RimO from Pelodictyon phaeoclathratiforme (strain DSM 5477 / BU-1).